Consider the following 654-residue polypeptide: tRNA uridine 5-carboxymethylaminomethyl modification enzyme MnmG (654 aa).

Position 17-22 (Gly-17–Gly-22) interacts with FAD. Gly-289–Phe-303 contributes to the NAD(+) binding site.

The protein belongs to the MnmG family. In terms of assembly, homodimer. Heterotetramer of two MnmE and two MnmG subunits. FAD is required as a cofactor.

Its subcellular location is the cytoplasm. Functionally, NAD-binding protein involved in the addition of a carboxymethylaminomethyl (cmnm) group at the wobble position (U34) of certain tRNAs, forming tRNA-cmnm(5)s(2)U34. The polypeptide is tRNA uridine 5-carboxymethylaminomethyl modification enzyme MnmG (Prochlorococcus marinus (strain MIT 9515)).